Here is a 135-residue protein sequence, read N- to C-terminus: uncharacterized protein (135 aa).

The helical transmembrane segment at 4–24 (LGVFLILASIVCGVVAICGCT) threads the bilayer.

It localises to the membrane. This is an uncharacterized protein from Methanocaldococcus jannaschii (strain ATCC 43067 / DSM 2661 / JAL-1 / JCM 10045 / NBRC 100440) (Methanococcus jannaschii).